The sequence spans 401 residues: Probable 2,3-bisphosphoglycerate-independent phosphoglycerate mutase (401 aa).

It belongs to the BPG-independent phosphoglycerate mutase family. A-PGAM subfamily.

It carries out the reaction (2R)-2-phosphoglycerate = (2R)-3-phosphoglycerate. It functions in the pathway carbohydrate degradation; glycolysis; pyruvate from D-glyceraldehyde 3-phosphate: step 3/5. In terms of biological role, catalyzes the interconversion of 2-phosphoglycerate and 3-phosphoglycerate. In Thermotoga maritima (strain ATCC 43589 / DSM 3109 / JCM 10099 / NBRC 100826 / MSB8), this protein is Probable 2,3-bisphosphoglycerate-independent phosphoglycerate mutase.